The primary structure comprises 222 residues: DnaJ homolog subfamily B member 9 (222 aa).

Positions 1 to 23 are cleaved as a signal peptide; the sequence is MATPQSVFVFAICILMITELILA. A J domain is found at 26-90; sequence SYYDILGVPK…HRRKEYDTVG (65 aa). The interval 91–222 is divergent targeting domain; it reads HTAFTNGKGQ…VTTYTDCSGQ (132 aa). S133 carries the phosphoserine modification.

In terms of assembly, interacts with HSPA5/BiP; interaction is direct. Interacts with ERN1/IRE1 (via the luminal region). Interacts with DERL1.

It localises to the endoplasmic reticulum lumen. Functionally, co-chaperone for Hsp70 protein HSPA5/BiP that acts as a key repressor of the ERN1/IRE1-mediated unfolded protein response (UPR). J domain-containing co-chaperones stimulate the ATPase activity of Hsp70 proteins and are required for efficient substrate recognition by Hsp70 proteins. In the unstressed endoplasmic reticulum, interacts with the luminal region of ERN1/IRE1 and selectively recruits HSPA5/BiP: HSPA5/BiP disrupts the dimerization of the active ERN1/IRE1 luminal region, thereby inactivating ERN1/IRE1. Also involved in endoplasmic reticulum-associated degradation (ERAD) of misfolded proteins. Required for survival of B-cell progenitors and normal antibody production. In Cricetulus griseus (Chinese hamster), this protein is DnaJ homolog subfamily B member 9.